The chain runs to 205 residues: Imidazole glycerol phosphate synthase subunit HisH (205 aa).

Residues K3–Q205 enclose the Glutamine amidotransferase type-1 domain. The active-site Nucleophile is C81. Catalysis depends on residues H185 and E187.

Heterodimer of HisH and HisF.

It is found in the cytoplasm. The enzyme catalyses 5-[(5-phospho-1-deoxy-D-ribulos-1-ylimino)methylamino]-1-(5-phospho-beta-D-ribosyl)imidazole-4-carboxamide + L-glutamine = D-erythro-1-(imidazol-4-yl)glycerol 3-phosphate + 5-amino-1-(5-phospho-beta-D-ribosyl)imidazole-4-carboxamide + L-glutamate + H(+). It carries out the reaction L-glutamine + H2O = L-glutamate + NH4(+). It functions in the pathway amino-acid biosynthesis; L-histidine biosynthesis; L-histidine from 5-phospho-alpha-D-ribose 1-diphosphate: step 5/9. IGPS catalyzes the conversion of PRFAR and glutamine to IGP, AICAR and glutamate. The HisH subunit catalyzes the hydrolysis of glutamine to glutamate and ammonia as part of the synthesis of IGP and AICAR. The resulting ammonia molecule is channeled to the active site of HisF. This is Imidazole glycerol phosphate synthase subunit HisH from Prochlorococcus marinus subsp. pastoris (strain CCMP1986 / NIES-2087 / MED4).